We begin with the raw amino-acid sequence, 670 residues long: Transketolase (670 aa).

A substrate-binding site is contributed by H31. Residues H71 and 120–122 (GPL) contribute to the thiamine diphosphate site. D161 is a Mg(2+) binding site. Residues G162 and N191 each coordinate thiamine diphosphate. The Mg(2+) site is built by N191 and I193. Positions 268, 362, and 389 each coordinate substrate. H268 provides a ligand contact to thiamine diphosphate. The Proton donor role is filled by E416. F443 serves as a coordination point for thiamine diphosphate. 3 residues coordinate substrate: H467, D475, and R528.

Homodimer. Mg(2+) serves as cofactor. It depends on Ca(2+) as a cofactor. The cofactor is Mn(2+). Co(2+) is required as a cofactor. Requires thiamine diphosphate as cofactor.

The catalysed reaction is D-sedoheptulose 7-phosphate + D-glyceraldehyde 3-phosphate = aldehydo-D-ribose 5-phosphate + D-xylulose 5-phosphate. Catalyzes the transfer of a two-carbon ketol group from a ketose donor to an aldose acceptor, via a covalent intermediate with the cofactor thiamine pyrophosphate. This is Transketolase (tkt) from Nostoc sp. (strain PCC 7120 / SAG 25.82 / UTEX 2576).